The sequence spans 258 residues: MLAKRIIPCLDVKDGQVVKGVQFRNHEIIGDIVPLAQRYAQEGADELVFYDITASSDGRVVDKSWVARVAEVIDIPFCVAGGIKSVEDASQILTFGADKISINSPALADPTLITRLADRYGVQCIVVGIDTWYDTESDSYQVYQFTGDEKRTKATTWQTEDWVKEVQLRGAGEIVLNMMNQDGVRNGYDLRQLQQMRAICHVPLIASGGAGTPDHFLEAFRDADVDGALAASVFHKQIINIGELKKYLSEQGVEIRVC.

Catalysis depends on residues Asp-11 and Asp-130.

The protein belongs to the HisA/HisF family. Heterodimer of HisH and HisF.

Its subcellular location is the cytoplasm. It catalyses the reaction 5-[(5-phospho-1-deoxy-D-ribulos-1-ylimino)methylamino]-1-(5-phospho-beta-D-ribosyl)imidazole-4-carboxamide + L-glutamine = D-erythro-1-(imidazol-4-yl)glycerol 3-phosphate + 5-amino-1-(5-phospho-beta-D-ribosyl)imidazole-4-carboxamide + L-glutamate + H(+). Its pathway is amino-acid biosynthesis; L-histidine biosynthesis; L-histidine from 5-phospho-alpha-D-ribose 1-diphosphate: step 5/9. Functionally, IGPS catalyzes the conversion of PRFAR and glutamine to IGP, AICAR and glutamate. The HisF subunit catalyzes the cyclization activity that produces IGP and AICAR from PRFAR using the ammonia provided by the HisH subunit. The protein is Imidazole glycerol phosphate synthase subunit HisF of Yersinia pseudotuberculosis serotype O:1b (strain IP 31758).